Here is a 161-residue protein sequence, read N- to C-terminus: Regulator of ribonuclease activity A (161 aa).

This sequence belongs to the RraA family. Homotrimer. Binds to both RNA-binding sites in the C-terminal region of Rne and to RhlB.

The protein localises to the cytoplasm. Globally modulates RNA abundance by binding to RNase E (Rne) and regulating its endonucleolytic activity. Can modulate Rne action in a substrate-dependent manner by altering the composition of the degradosome. Modulates RNA-binding and helicase activities of the degradosome. This chain is Regulator of ribonuclease activity A, found in Salmonella agona (strain SL483).